Reading from the N-terminus, the 448-residue chain is Cysteine--tRNA ligase (448 aa).

C29 provides a ligand contact to Zn(2+). The 'HIGH' region motif lies at P31–N41. Over residues A79–H91 the composition is skewed to basic and acidic residues. Residues A79–P106 are disordered. 2 residues coordinate Zn(2+): C206 and E235. Residues R265 to S269 carry the 'KMSKS' region motif. ATP is bound at residue K268.

This sequence belongs to the class-I aminoacyl-tRNA synthetase family. Monomer. Requires Zn(2+) as cofactor.

It is found in the cytoplasm. The catalysed reaction is tRNA(Cys) + L-cysteine + ATP = L-cysteinyl-tRNA(Cys) + AMP + diphosphate. This Azospirillum brasilense protein is Cysteine--tRNA ligase (cysS).